The following is a 700-amino-acid chain: Elongation factor G 2 (700 aa).

One can recognise a tr-type G domain in the interval 8 to 290 (ERYRNIGISA…AVVDYLPSPI (283 aa)). Residues 17–24 (AHIDAGKT), 88–92 (DTPGH), and 142–145 (NKMD) contribute to the GTP site.

It belongs to the TRAFAC class translation factor GTPase superfamily. Classic translation factor GTPase family. EF-G/EF-2 subfamily.

The protein resides in the cytoplasm. Catalyzes the GTP-dependent ribosomal translocation step during translation elongation. During this step, the ribosome changes from the pre-translocational (PRE) to the post-translocational (POST) state as the newly formed A-site-bound peptidyl-tRNA and P-site-bound deacylated tRNA move to the P and E sites, respectively. Catalyzes the coordinated movement of the two tRNA molecules, the mRNA and conformational changes in the ribosome. In Ralstonia nicotianae (strain ATCC BAA-1114 / GMI1000) (Ralstonia solanacearum), this protein is Elongation factor G 2 (fusB).